The chain runs to 397 residues: Lysophospholipid transporter LplT (397 aa).

Residues 1–17 (MSESVHTNTSLWSKGMK) are Periplasmic-facing. The helical transmembrane segment at 18–38 (AVIVAQFLSAFGDNALLFATL) threads the bilayer. Residues 39-52 (ALLKAQFYPEWSQP) are Cytoplasmic-facing. A helical transmembrane segment spans residues 53–73 (ILQMVFVGAYILFAPFVGQVA). Residues 74-90 (DSFAKGRVMMFANGLKL) are Periplasmic-facing. A helical transmembrane segment spans residues 91–111 (LGAASICFGINPFLGYTLVGV). Over 112 to 144 (GAAAYSPAKYGILGELTTGSKLVKANGLMEAST) the chain is Cytoplasmic. The helical transmembrane segment at 145–165 (IAAILLGSVAGGVLADWHVLV) threads the bilayer. A topological domain (periplasmic) is located at residue Ala166. Residues 167 to 187 (LAACALAYGGAVVANIYIPKL) form a helical membrane-spanning segment. The Cytoplasmic segment spans residues 188 to 226 (AAARPGQSWNLINMTRSFLNACTSLWRNGETRFSLVGTS). The chain crosses the membrane as a helical span at residues 227-247 (LFWGAGVTLRFLLVLWVPVAL). Residues 248–256 (GITDNATPT) are Periplasmic-facing. The chain crosses the membrane as a helical span at residues 257–277 (YLNAMVAIGIVVGAGAAAKLV). Residues 278–280 (TLE) lie on the Cytoplasmic side of the membrane. Residues 281–301 (TVSRCMPAGILIGVVVLIFSL) traverse the membrane as a helical segment. The Periplasmic segment spans residues 302-304 (QHE). A helical transmembrane segment spans residues 305 to 325 (LLPAYALLMLIGVLGGFFVVP). Over 326-343 (LNALLQERGKKSVGAGNA) the chain is Cytoplasmic. Residues 344-364 (IAVQNLGENSAMLLMLGIYSL) form a helical membrane-spanning segment. Over 365–366 (AV) the chain is Periplasmic. A helical transmembrane segment spans residues 367–387 (MVGIPVVPIGIGFGTLFALAI). At 388 to 397 (TALWIWQRRH) the chain is on the cytoplasmic side.

This sequence belongs to the major facilitator superfamily. LplT (TC 2.A.1.42) family.

It is found in the cell inner membrane. In terms of biological role, catalyzes the facilitated diffusion of 2-acyl-glycero-3-phosphoethanolamine (2-acyl-GPE) into the cell. The chain is Lysophospholipid transporter LplT from Escherichia coli O9:H4 (strain HS).